We begin with the raw amino-acid sequence, 133 residues long: UPF0292 protein TK1411 (133 aa).

A Toprim domain is found at 20–100 (EGALIVEGLR…SVDIETWKEL (81 aa)). Mg(2+)-binding residues include E26, D69, and D71.

This sequence belongs to the UPF0292 family. The cofactor is Mg(2+).

The protein is UPF0292 protein TK1411 of Thermococcus kodakarensis (strain ATCC BAA-918 / JCM 12380 / KOD1) (Pyrococcus kodakaraensis (strain KOD1)).